A 363-amino-acid polypeptide reads, in one-letter code: Histidinol-phosphate aminotransferase (363 aa).

Lysine 226 carries the N6-(pyridoxal phosphate)lysine modification.

Belongs to the class-II pyridoxal-phosphate-dependent aminotransferase family. Histidinol-phosphate aminotransferase subfamily. In terms of assembly, homodimer. Pyridoxal 5'-phosphate is required as a cofactor.

It carries out the reaction L-histidinol phosphate + 2-oxoglutarate = 3-(imidazol-4-yl)-2-oxopropyl phosphate + L-glutamate. Its pathway is amino-acid biosynthesis; L-histidine biosynthesis; L-histidine from 5-phospho-alpha-D-ribose 1-diphosphate: step 7/9. In Campylobacter lari (strain RM2100 / D67 / ATCC BAA-1060), this protein is Histidinol-phosphate aminotransferase.